The sequence spans 90 residues: Small ribosomal subunit protein bS18 (90 aa).

The interval 1–23 (MKPMRQKNTRAQGNKSISNALAS) is disordered. Over residues 9–21 (TRAQGNKSISNAL) the composition is skewed to polar residues.

This sequence belongs to the bacterial ribosomal protein bS18 family. As to quaternary structure, part of the 30S ribosomal subunit. Forms a tight heterodimer with protein bS6.

Functionally, binds as a heterodimer with protein bS6 to the central domain of the 16S rRNA, where it helps stabilize the platform of the 30S subunit. This is Small ribosomal subunit protein bS18 from Chlorobium luteolum (strain DSM 273 / BCRC 81028 / 2530) (Pelodictyon luteolum).